A 273-amino-acid chain; its full sequence is 5-deoxy-glucuronate isomerase (273 aa).

This sequence belongs to the isomerase IolB family.

It carries out the reaction 5-deoxy-D-glucuronate = 5-dehydro-2-deoxy-D-gluconate. It participates in polyol metabolism; myo-inositol degradation into acetyl-CoA; acetyl-CoA from myo-inositol: step 4/7. Its function is as follows. Involved in the isomerization of 5-deoxy-glucuronate (5DG) to 5-dehydro-2-deoxy-D-gluconate (DKG or 2-deoxy-5-keto-D-gluconate). This Listeria monocytogenes serovar 1/2a (strain ATCC BAA-679 / EGD-e) protein is 5-deoxy-glucuronate isomerase.